A 419-amino-acid chain; its full sequence is Dimethylamine methyltransferase MtbB2 (419 aa).

A non-standard amino acid (pyrrolysine) is located at residue Pyl308.

Belongs to the dimethylamine methyltransferase family.

It catalyses the reaction Co(I)-[dimethylamine-specific corrinoid protein] + dimethylamine + H(+) = methyl-Co(III)-[dimethylamine-specific corrinoid protein] + methylamine. Its pathway is one-carbon metabolism; methanogenesis from dimethylamine. Its function is as follows. Catalyzes the transfer of a methyl group from dimethylamine to the corrinoid cofactor of MtbC. No evidence for expression of this protein has been found after growth under presumably inducing conditions. This is Dimethylamine methyltransferase MtbB2 from Methanosarcina barkeri.